The chain runs to 567 residues: TPR repeat-containing protein MJ1428 (567 aa).

TPR repeat units lie at residues 14 to 47, 48 to 81, 83 to 115, 116 to 148, 150 to 183, 199 to 234, 236 to 268, 269 to 301, 303 to 335, 344 to 379, 380 to 412, 414 to 446, and 505 to 538; these read YEDW…KNTN, PIDW…SPSN, YFAY…IKNE, ELFE…ANSK, LNAL…NPSH, INSY…DENS, ISYY…FNRS, LYYA…NSQN, YAYF…YLEE, LNLY…ENSS, RWWY…NPKD, STLK…VNSL, and AYIY…EMYR.

The sequence is that of TPR repeat-containing protein MJ1428 from Methanocaldococcus jannaschii (strain ATCC 43067 / DSM 2661 / JAL-1 / JCM 10045 / NBRC 100440) (Methanococcus jannaschii).